The sequence spans 231 residues: Orotidine 5'-phosphate decarboxylase (231 aa).

Substrate contacts are provided by residues Asp9, Lys34, 62-71 (DLKLHDIPSV), Thr117, Arg179, Gln188, Gly208, and Arg209. Lys64 (proton donor) is an active-site residue.

Belongs to the OMP decarboxylase family. Type 1 subfamily. In terms of assembly, homodimer.

It carries out the reaction orotidine 5'-phosphate + H(+) = UMP + CO2. It participates in pyrimidine metabolism; UMP biosynthesis via de novo pathway; UMP from orotate: step 2/2. Its function is as follows. Catalyzes the decarboxylation of orotidine 5'-monophosphate (OMP) to uridine 5'-monophosphate (UMP). The protein is Orotidine 5'-phosphate decarboxylase of Aquifex aeolicus (strain VF5).